A 276-amino-acid chain; its full sequence is NADH-cytochrome b5 reductase 2 (276 aa).

The FAD-binding FR-type domain maps to 15-127; sequence EAKYPLPLIE…RGPTGRLFYN (113 aa). Lys-17 is modified (N6-acetyllysine). A Phosphotyrosine modification is found at Tyr-18. Residues 107-137 and 146-181 contribute to the FAD site; these read ENMK…IKAN and LVHH…RMSL.

It belongs to the flavoprotein pyridine nucleotide cytochrome reductase family. FAD serves as cofactor.

The enzyme catalyses 2 Fe(III)-[cytochrome b5] + NADH = 2 Fe(II)-[cytochrome b5] + NAD(+) + H(+). Its function is as follows. NADH-cytochrome b5 reductases are involved in desaturation and elongation of fatty acids, cholesterol biosynthesis, drug metabolism, and, in erythrocyte, methemoglobin reduction. Responsible for NADH-dependent lucigenin chemiluminescence in spermatozoa by reducing both lucigenin and 2-[4-iodophenyl]-3-[4-nitrophenyl]-5-[2,4-disulfophenyl]-2H tetrazolium monosodium salt (WST-1). In Mus musculus (Mouse), this protein is NADH-cytochrome b5 reductase 2 (Cyb5r2).